The following is a 262-amino-acid chain: Putative non-heme bromoperoxidase BpoC (262 aa).

Residues R21, 87-88 (SM), and R120 contribute to the substrate site. Residue S87 is part of the active site. Active-site residues include D211 and H239. Residue H239 coordinates substrate.

Belongs to the AB hydrolase superfamily. Homodimer.

This Mycobacterium tuberculosis (strain CDC 1551 / Oshkosh) protein is Putative non-heme bromoperoxidase BpoC (bpoC).